A 376-amino-acid polypeptide reads, in one-letter code: N-acetyldiaminopimelate deacetylase (376 aa).

Residue aspartate 69 is part of the active site. Residue glutamate 128 is the Proton acceptor of the active site.

It belongs to the peptidase M20A family. N-acetyldiaminopimelate deacetylase subfamily.

It carries out the reaction N-acetyl-(2S,6S)-2,6-diaminopimelate + H2O = (2S,6S)-2,6-diaminopimelate + acetate. The protein operates within amino-acid biosynthesis; L-lysine biosynthesis via DAP pathway; LL-2,6-diaminopimelate from (S)-tetrahydrodipicolinate (acetylase route): step 3/3. In terms of biological role, catalyzes the conversion of N-acetyl-diaminopimelate to diaminopimelate and acetate. In Streptococcus pneumoniae (strain Taiwan19F-14), this protein is N-acetyldiaminopimelate deacetylase.